The following is a 39-amino-acid chain: Mu-like prophage FluMu protein com (39 aa).

It belongs to the com family.

The chain is Mu-like prophage FluMu protein com from Haemophilus influenzae (strain ATCC 51907 / DSM 11121 / KW20 / Rd).